The chain runs to 286 residues: Putative L-ribulose-5-phosphate 3-epimerase SgbU (286 aa).

It belongs to the L-ribulose-5-phosphate 3-epimerase family.

It carries out the reaction L-ribulose 5-phosphate = L-xylulose 5-phosphate. Functionally, catalyzes the isomerization of L-xylulose-5-phosphate to L-ribulose-5-phosphate (Potential). May be involved in the utilization of 2,3-diketo-L-gulonate. The chain is Putative L-ribulose-5-phosphate 3-epimerase SgbU (sgbU) from Escherichia coli (strain K12).